Reading from the N-terminus, the 218-residue chain is Kynurenine formamidase (218 aa).

Trp-27 lines the substrate pocket. Residues His-57, His-61, and Asp-63 each coordinate Zn(2+). His-67 (proton donor/acceptor) is an active-site residue. His-169 and Glu-181 together coordinate Zn(2+).

It belongs to the Cyclase 1 superfamily. KynB family. Homodimer. The cofactor is Zn(2+).

The catalysed reaction is N-formyl-L-kynurenine + H2O = L-kynurenine + formate + H(+). It participates in amino-acid degradation; L-tryptophan degradation via kynurenine pathway; L-kynurenine from L-tryptophan: step 2/2. Its activity is regulated as follows. Inhibited by EDTA. Insensitive to phenylmethylsulfonyl fluoride (PMSF). Catalyzes the hydrolysis of N-formyl-L-kynurenine to L-kynurenine, the second step in the kynurenine pathway of tryptophan degradation. The sequence is that of Kynurenine formamidase from Cupriavidus metallidurans (strain ATCC 43123 / DSM 2839 / NBRC 102507 / CH34) (Ralstonia metallidurans).